Reading from the N-terminus, the 152-residue chain is Superoxide dismutase [Cu-Zn] 2 (152 aa).

Cu cation-binding residues include histidine 45, histidine 47, and histidine 62. Residues 53-81 form a disordered region; sequence TNGSMSTGPHFNPDGKQHGAPEDANRHAG. 4 residues coordinate Zn(2+): histidine 62, histidine 70, histidine 79, and aspartate 82. Over residues 65 to 81 the composition is skewed to basic and acidic residues; the sequence is PDGKQHGAPEDANRHAG. Histidine 119 contributes to the Cu cation binding site.

This sequence belongs to the Cu-Zn superoxide dismutase family. Homodimer. It depends on Cu cation as a cofactor. Requires Zn(2+) as cofactor.

It localises to the cytoplasm. The enzyme catalyses 2 superoxide + 2 H(+) = H2O2 + O2. Functionally, destroys radicals which are normally produced within the cells and which are toxic to biological systems. The protein is Superoxide dismutase [Cu-Zn] 2 (SODCC2) of Brassica juncea (Indian mustard).